A 353-amino-acid chain; its full sequence is Nicotinate-nucleotide--dimethylbenzimidazole phosphoribosyltransferase (353 aa).

Glutamate 318 (proton acceptor) is an active-site residue.

This sequence belongs to the CobT family.

It catalyses the reaction 5,6-dimethylbenzimidazole + nicotinate beta-D-ribonucleotide = alpha-ribazole 5'-phosphate + nicotinate + H(+). The protein operates within nucleoside biosynthesis; alpha-ribazole biosynthesis; alpha-ribazole from 5,6-dimethylbenzimidazole: step 1/2. Catalyzes the synthesis of alpha-ribazole-5'-phosphate from nicotinate mononucleotide (NAMN) and 5,6-dimethylbenzimidazole (DMB). This Roseiflexus sp. (strain RS-1) protein is Nicotinate-nucleotide--dimethylbenzimidazole phosphoribosyltransferase.